A 184-amino-acid polypeptide reads, in one-letter code: Chromophore lyase CpcS/CpeS 1 (184 aa).

It belongs to the CpcS/CpeS biliprotein lyase family.

Covalently attaches a chromophore to Cys residue(s) of phycobiliproteins. The polypeptide is Chromophore lyase CpcS/CpeS 1 (Synechococcus sp. (strain JA-3-3Ab) (Cyanobacteria bacterium Yellowstone A-Prime)).